Consider the following 162-residue polypeptide: Cytochrome c-type biogenesis protein CcmE (162 aa).

Residues 1–8 are Cytoplasmic-facing; sequence MNPVRKKR. The chain crosses the membrane as a helical; Signal-anchor for type II membrane protein span at residues 9 to 29; that stretch reads LIIVLAIVVGVGAAVGLALSA. Topologically, residues 30 to 162 are periplasmic; it reads LQQNINLFYT…GETSYNQEGK (133 aa). The heme site is built by His-124 and Tyr-128. Over residues 139 to 148 the composition is skewed to basic and acidic residues; it reads DSGQLKHYEN. Residues 139-162 form a disordered region; it reads DSGQLKHYENGKAAGETSYNQEGK.

This sequence belongs to the CcmE/CycJ family.

It localises to the cell inner membrane. Heme chaperone required for the biogenesis of c-type cytochromes. Transiently binds heme delivered by CcmC and transfers the heme to apo-cytochromes in a process facilitated by CcmF and CcmH. This is Cytochrome c-type biogenesis protein CcmE from Pseudomonas aeruginosa (strain LESB58).